A 322-amino-acid polypeptide reads, in one-letter code: Zinc finger C2HC domain-containing protein CBG14627 (322 aa).

2 consecutive C2HC/C3H-type zinc fingers follow at residues 9–38 (PVYPCPICGRKFVKSSLEKHESACRKLATL) and 119–148 (DYVQCEYCSRNFNAAAAERHIPFCREQTTR). Cysteine 13, cysteine 16, histidine 28, cysteine 32, cysteine 123, cysteine 126, histidine 138, and cysteine 142 together coordinate Zn(2+). The disordered stretch occupies residues 144-322 (EQTTRKQGGK…SRNNSRSRIF (179 aa)). Over residues 148–168 (RKQGGKSSAGNRGLTSNNYRS) the composition is skewed to polar residues. Positions 171 to 219 (SKHEGRKQESSSRNGSAERKTTTRGRDGSLSRARRDDSNDLTNRRKSLE) are enriched in basic and acidic residues. The span at 220–238 (TRSQLTTGQANNRTTSLSA) shows a compositional bias: polar residues. Positions 278–294 (TTTTASASRSGSGSSSR) are enriched in low complexity. The span at 296-305 (RTRDESRESR) shows a compositional bias: basic and acidic residues. Low complexity predominate over residues 311-322 (SNSRNNSRSRIF).

Belongs to the ZC2HC1 family. Zn(2+) is required as a cofactor.

The polypeptide is Zinc finger C2HC domain-containing protein CBG14627 (Caenorhabditis briggsae).